Consider the following 613-residue polypeptide: V-type proton ATPase catalytic subunit A isoform 1 (613 aa).

Position 240 to 247 (240 to 247 (GAFGCGKT)) interacts with ATP.

This sequence belongs to the ATPase alpha/beta chains family. V-ATPase is a heteromultimeric enzyme composed of a peripheral catalytic V1 complex (main components: subunits A, B, C, D, E, and F) attached to an integral membrane V0 proton pore complex (main component: the proteolipid protein).

It catalyses the reaction ATP + H2O + 4 H(+)(in) = ADP + phosphate + 5 H(+)(out). In terms of biological role, catalytic subunit of the peripheral V1 complex of vacuolar ATPase. V-ATPase vacuolar ATPase is responsible for acidifying a variety of intracellular compartments in eukaryotic cells. The sequence is that of V-type proton ATPase catalytic subunit A isoform 1 from Acetabularia acetabulum (Mermaid's wine glass).